The chain runs to 321 residues: Phospho-N-acetylmuramoyl-pentapeptide-transferase (321 aa).

10 helical membrane-spanning segments follow: residues 1 to 21 (MIFV…PVLI), 50 to 70 (MGGL…IIFV), 76 to 96 (IILL…DDYI), 112 to 132 (FLAQ…FHLV), 140 to 160 (IPFT…IVFW), 176 to 196 (GLAT…SFVL), 200 to 220 (AIGI…PYNI), 225 to 245 (VFMG…ISIM), 250 to 270 (LSLI…MLQV), and 300 to 320 (VVTV…WIGV).

This sequence belongs to the glycosyltransferase 4 family. MraY subfamily. It depends on Mg(2+) as a cofactor.

Its subcellular location is the cell membrane. It catalyses the reaction UDP-N-acetyl-alpha-D-muramoyl-L-alanyl-gamma-D-glutamyl-L-lysyl-D-alanyl-D-alanine + di-trans,octa-cis-undecaprenyl phosphate = Mur2Ac(oyl-L-Ala-gamma-D-Glu-L-Lys-D-Ala-D-Ala)-di-trans,octa-cis-undecaprenyl diphosphate + UMP. Its pathway is cell wall biogenesis; peptidoglycan biosynthesis. Catalyzes the initial step of the lipid cycle reactions in the biosynthesis of the cell wall peptidoglycan: transfers peptidoglycan precursor phospho-MurNAc-pentapeptide from UDP-MurNAc-pentapeptide onto the lipid carrier undecaprenyl phosphate, yielding undecaprenyl-pyrophosphoryl-MurNAc-pentapeptide, known as lipid I. This Staphylococcus aureus (strain MSSA476) protein is Phospho-N-acetylmuramoyl-pentapeptide-transferase.